The primary structure comprises 375 residues: MKLVCRQNELNTSLSLVSRAVPSRPNHPVLANVLLAADAGTQRLSLTAFDLSLGIQTSFAAQVERSGAITLPAKLLNDIVSRLPNDSDVTLEDNDAAATLSVGSGQYQMRGISADEFPELPLVQSQEALQLSASALIEGLRGTLFATSGDETKQILTGVHLKVQPDGLEFAATDGHRLAVVKTENAAATPATEFAVTVPSRALRDLERMIAIRGSDEAIALYHDQGQTVFQWGDQYLTSRTLDGQYPNYGQLIPREFNRNVAVDRKRLLAALERIAVLADQQNNAIRLSLDPENNRLALAVDAQDVGSGQEAVPAEIIGEPLEIAFNVRYLAEGLKALNTTDIQIQLNSNTSPVVLSPLGPVKITYLVMPIQLRS.

It belongs to the beta sliding clamp family. As to quaternary structure, forms a ring-shaped head-to-tail homodimer around DNA which binds and tethers DNA polymerases and other proteins to the DNA. The DNA replisome complex has a single clamp-loading complex (3 tau and 1 each of delta, delta', psi and chi subunits) which binds 3 Pol III cores (1 core on the leading strand and 2 on the lagging strand) each with a beta sliding clamp dimer. Additional proteins in the replisome are other copies of gamma, psi and chi, Ssb, DNA helicase and RNA primase.

Its subcellular location is the cytoplasm. In terms of biological role, confers DNA tethering and processivity to DNA polymerases and other proteins. Acts as a clamp, forming a ring around DNA (a reaction catalyzed by the clamp-loading complex) which diffuses in an ATP-independent manner freely and bidirectionally along dsDNA. Initially characterized for its ability to contact the catalytic subunit of DNA polymerase III (Pol III), a complex, multichain enzyme responsible for most of the replicative synthesis in bacteria; Pol III exhibits 3'-5' exonuclease proofreading activity. The beta chain is required for initiation of replication as well as for processivity of DNA replication. The sequence is that of Beta sliding clamp (dnaN) from Synechococcus elongatus (strain ATCC 33912 / PCC 7942 / FACHB-805) (Anacystis nidulans R2).